We begin with the raw amino-acid sequence, 507 residues long: ATP synthase subunit alpha (507 aa).

ATP is bound at residue 169–176; the sequence is GDRQTGKT.

It belongs to the ATPase alpha/beta chains family. In terms of assembly, F-type ATPases have 2 components, CF(1) - the catalytic core - and CF(0) - the membrane proton channel. CF(1) has five subunits: alpha(3), beta(3), gamma(1), delta(1), epsilon(1). CF(0) has three main subunits: a(1), b(2) and c(9-12). The alpha and beta chains form an alternating ring which encloses part of the gamma chain. CF(1) is attached to CF(0) by a central stalk formed by the gamma and epsilon chains, while a peripheral stalk is formed by the delta and b chains. In this bacterium the a and b subunits are transcribed but do not seem to be translated, thus the ATP synthase consists of the alpha, beta, gamma, delta, epsilon and c subunits.

The protein resides in the cell membrane. It catalyses the reaction ATP + H2O + 4 H(+)(in) = ADP + phosphate + 5 H(+)(out). In terms of biological role, produces ATP from ADP in the presence of a proton gradient across the membrane. The alpha chain is a regulatory subunit. The polypeptide is ATP synthase subunit alpha (Moorella thermoacetica (strain ATCC 39073 / JCM 9320)).